The following is a 411-amino-acid chain: UPF0761 membrane protein PA0951 (411 aa).

The next 6 helical transmembrane spans lie at 36–56, 92–112, 132–152, 174–194, 207–229, and 244–264; these read LFAV…IPAF, HLTW…LVTI, FLLY…GFAV, LLGL…YSAV, GGVF…VSLF, and IFLL…VLVC.

Belongs to the UPF0761 family.

It is found in the cell inner membrane. This chain is UPF0761 membrane protein PA0951, found in Pseudomonas aeruginosa (strain ATCC 15692 / DSM 22644 / CIP 104116 / JCM 14847 / LMG 12228 / 1C / PRS 101 / PAO1).